Consider the following 271-residue polypeptide: Phosphatidylglycerol--prolipoprotein diacylglyceryl transferase (271 aa).

A run of 3 helical transmembrane segments spans residues 17-37 (LAIHWYGLTYLAAFGLFFFLA), 63-83 (ILFLGVMGVVIGGRLGYCLFY), and 95-115 (IFAVWQGGMSFHGGMLGVLVS). An a 1,2-diacyl-sn-glycero-3-phospho-(1'-sn-glycerol)-binding site is contributed by arginine 146. A run of 3 helical transmembrane segments spans residues 182–202 (SQVYQFLMEGLLLFVLLWLYA), 209–229 (GQVSGAFLVGYGVFRFIAEFF), and 243–263 (MSMGQWLCVPMIAAGIWLWIW).

It belongs to the Lgt family.

The protein resides in the cell inner membrane. The enzyme catalyses L-cysteinyl-[prolipoprotein] + a 1,2-diacyl-sn-glycero-3-phospho-(1'-sn-glycerol) = an S-1,2-diacyl-sn-glyceryl-L-cysteinyl-[prolipoprotein] + sn-glycerol 1-phosphate + H(+). It functions in the pathway protein modification; lipoprotein biosynthesis (diacylglyceryl transfer). Catalyzes the transfer of the diacylglyceryl group from phosphatidylglycerol to the sulfhydryl group of the N-terminal cysteine of a prolipoprotein, the first step in the formation of mature lipoproteins. The sequence is that of Phosphatidylglycerol--prolipoprotein diacylglyceryl transferase from Polaromonas naphthalenivorans (strain CJ2).